We begin with the raw amino-acid sequence, 443 residues long: Minovincinine 19-hydroxy-O-acetyltransferase (443 aa).

The Proton acceptor role is filled by His157. A Nuclear localization signal motif is present at residues 215–222; the sequence is RKRFLFSP. The stretch at 316–343 forms a coiled coil; that stretch reads TKLVIGELRKAKDKLKNLSQEKLNYVAR. The active-site Proton acceptor is Asp384.

The protein belongs to the plant acyltransferase family. As to quaternary structure, monomer. In terms of tissue distribution, expressed in cortical cells of the root tip, especially in hairy roots, as well as in etiolated seedlings. Mostly expressed in roots, and, at lower levels, in leaves.

It localises to the cytoplasm. It is found in the nucleus. It catalyses the reaction (+)-minovincinine + acetyl-CoA = (+)-echitovenine + CoA. It functions in the pathway alkaloid biosynthesis. Functionally, component of the monoterpenoid indole alkaloids (MIAs, e.g. echitovenine, tabersonine, lochnericine, 19-hydroxytabersonine and horhammericine) biosynthetic pathway; MIAs are used in cancer treatment and other medical applications. Acyltransferase catalyzing the conversion of (+)-minovincinine to (+)-echitovenine. This is Minovincinine 19-hydroxy-O-acetyltransferase from Catharanthus roseus (Madagascar periwinkle).